The sequence spans 241 residues: DNA repair protein RecO (241 aa).

The protein belongs to the RecO family.

In terms of biological role, involved in DNA repair and RecF pathway recombination. The sequence is that of DNA repair protein RecO from Dinoroseobacter shibae (strain DSM 16493 / NCIMB 14021 / DFL 12).